A 127-amino-acid chain; its full sequence is Fluoride-specific ion channel FluC (127 aa).

Transmembrane regions (helical) follow at residues 4–24 (LLLAVFIGGGTGSVARWLLSM), 35–55 (LGTLAANLIGAFIIGMGFAWF), 71–91 (TGFCGGLTTFSTFSAEVVFLL), and 103–123 (VFVNLLGSFAMTALAFWLFSA). Gly75 and Thr78 together coordinate Na(+).

The protein belongs to the fluoride channel Fluc/FEX (TC 1.A.43) family.

It is found in the cell inner membrane. It carries out the reaction fluoride(in) = fluoride(out). Na(+) is not transported, but it plays an essential structural role and its presence is essential for fluoride channel function. In terms of biological role, fluoride-specific ion channel. Important for reducing fluoride concentration in the cell, thus reducing its toxicity. In Escherichia coli O17:K52:H18 (strain UMN026 / ExPEC), this protein is Fluoride-specific ion channel FluC.